Reading from the N-terminus, the 504-residue chain is Occludin (504 aa).

At 1–57 (MFSKKSYDGPPAGYGPPTGYGAPTADYGYGSPPPGSYYVDDAPQLFYKWTSPPGAVR) the chain is on the cytoplasmic side. The 203-residue stretch at 51 to 253 (SPPGAVRGLQ…ICFFAQKTRS (203 aa)) folds into the MARVEL domain. A helical membrane pass occupies residues 58-80 (GLQAGVLVLCIAIFACVASTLAW). Topologically, residues 81–123 (DYGYGLGGAYGTGLGGFYGSNYYGSGLSYSYGYGGYYGGVNQR) are extracellular. The chain crosses the membrane as a helical span at residues 124 to 148 (TANGFMIAMAVLCFLAQLGLLVAAL). The Cytoplasmic segment spans residues 149 to 158 (SKSGATRSRR). Residues 159-183 (FYLAVLVLSAVLAFVMLIASIVYIM) form a helical membrane-spanning segment. At 184-227 (GVNPQAQMSSGYYYSPLLAMCSQAYGSTYLNQYIYHYCTVDPQE) the chain is on the extracellular side. A disulfide bond links Cys204 and Cys221. Residues 228 to 249 (AVAAVCGFLIVILLCLICFFAQ) form a helical membrane-spanning segment. At 250-504 (KTRSKIWRYG…MVSAYDKVRG (255 aa)) the chain is on the cytoplasmic side. Residues 324–396 (PSGTYSSRGD…VESSDERDQE (73 aa)) are disordered. The segment covering 361–370 (PARRGRRRRR) has biased composition (basic residues). A phosphotyrosine mark is found at Tyr379 and Tyr383. Residues 379-385 (YETDYTT) are interaction with TJP1. The region spanning 396 to 504 (EQWASLYPPI…MVSAYDKVRG (109 aa)) is the OCEL domain. Positions 412–471 (QRYKQEFDTDLKRYKQLCAEMDSINDRLNQLSRRLDSITEDSPQYQDVAEEYNQLKDLKR) form a coiled coil.

The protein belongs to the ELL/occludin family. As to quaternary structure, interacts with TJP1 and TJP3. In terms of processing, phosphorylated. As to expression, localized at tight junctions of both epithelial and endothelial cells. Highly expressed in lung and liver. Expressed at a lower level in brain.

Its subcellular location is the cell membrane. The protein localises to the cell junction. It localises to the tight junction. In terms of biological role, may play a role in the formation and regulation of the tight junction (TJ) paracellular permeability barrier. Interacts with ZO-1. The protein is Occludin (OCLN) of Gallus gallus (Chicken).